The chain runs to 283 residues: uncharacterized protein (283 aa).

The segment covering 208-232 has biased composition (basic and acidic residues); the sequence is SMENKVNETQNSKEDEKKKNDGDGK. Residues 208–237 form a disordered region; it reads SMENKVNETQNSKEDEKKKNDGDGKRSKKK.

This is an uncharacterized protein from Saccharomyces cerevisiae (strain ATCC 204508 / S288c) (Baker's yeast).